A 1142-amino-acid chain; its full sequence is DNA-directed RNA polymerase subunit beta N-terminal section (1142 aa).

This sequence belongs to the RNA polymerase beta chain family. In plastids the minimal PEP RNA polymerase catalytic core is composed of four subunits: alpha, beta, beta', and beta''. When a (nuclear-encoded) sigma factor is associated with the core the holoenzyme is formed, which can initiate transcription.

The protein localises to the plastid. It is found in the chloroplast. It carries out the reaction RNA(n) + a ribonucleoside 5'-triphosphate = RNA(n+1) + diphosphate. DNA-dependent RNA polymerase catalyzes the transcription of DNA into RNA using the four ribonucleoside triphosphates as substrates. This Pleurastrum terricola (Filamentous green alga) protein is DNA-directed RNA polymerase subunit beta N-terminal section (rpoB1).